The primary structure comprises 201 residues: Natural cytotoxicity triggering receptor 3 (201 aa).

An N-terminal signal peptide occupies residues 1–18 (MAWMLLLILIMVHPGSCA). The Ig-like domain maps to 19–126 (LWVSQPPEIR…VGTGNGTRLV (108 aa)). The Extracellular portion of the chain corresponds to 19–135 (LWVSQPPEIR…VVEKEHPQLG (117 aa)). Cys-39 and Cys-108 form a disulfide bridge. N-linked (GlcNAc...) asparagine glycosylation is found at Asn-42 and Asn-121. Residues 136-156 (AGTVLLLRAGFYAVSFLSVAV) form a helical membrane-spanning segment. At 157-201 (GSTVYYQGKCLTWKGPRRQLPAVVPAPLPPPCGSSAHLLPPVPGG) the chain is on the cytoplasmic side.

Belongs to the natural cytotoxicity receptor (NCR) family. In terms of assembly, homodimer in the unliganted form. Interacts with CD3Z. Interacts with and is activated by binding to NCR3LG1. Interacts with and is activated by binding to BAG6. Interacts with and is inhibited by binding to LGALS3. As to expression, selectively expressed by all resting and activated NK cells and weakly expressed in spleen.

The protein localises to the cell membrane. In terms of biological role, cell membrane receptor of natural killer/NK cells that is activated by binding of extracellular ligands including BAG6 and NCR3LG1. Stimulates NK cells cytotoxicity toward neighboring cells producing these ligands. It controls, for instance, NK cells cytotoxicity against tumor cells. Engagement of NCR3 by BAG6 also promotes myeloid dendritic cells (DC) maturation, both through killing DCs that did not acquire a mature phenotype, and inducing the release by NK cells of TNFA and IFNG which promote DC maturation. This Homo sapiens (Human) protein is Natural cytotoxicity triggering receptor 3.